The following is a 413-amino-acid chain: Putative F-box/kelch-repeat protein At3g22870 (413 aa).

The 52-residue stretch at 2–53 (TLTISDLPRDLKKKIFSRIPLRYVRALRLTCKEWETLIKSRSLKIDEEESQM) folds into the F-box domain. Kelch repeat units follow at residues 156–202 (LLRF…IGVS) and 331–379 (KVFI…RRRQ).

This chain is Putative F-box/kelch-repeat protein At3g22870, found in Arabidopsis thaliana (Mouse-ear cress).